Here is a 149-residue protein sequence, read N- to C-terminus: Nucleoside diphosphate kinase (149 aa).

Residues K9, F57, R85, T91, R102, and N112 each coordinate ATP. The active-site Pros-phosphohistidine intermediate is H115.

Belongs to the NDK family. In terms of assembly, homotetramer. Requires Mg(2+) as cofactor.

It localises to the cytoplasm. The catalysed reaction is a 2'-deoxyribonucleoside 5'-diphosphate + ATP = a 2'-deoxyribonucleoside 5'-triphosphate + ADP. It carries out the reaction a ribonucleoside 5'-diphosphate + ATP = a ribonucleoside 5'-triphosphate + ADP. Its function is as follows. Major role in the synthesis of nucleoside triphosphates other than ATP. The ATP gamma phosphate is transferred to the NDP beta phosphate via a ping-pong mechanism, using a phosphorylated active-site intermediate. The polypeptide is Nucleoside diphosphate kinase (Desulforamulus reducens (strain ATCC BAA-1160 / DSM 100696 / MI-1) (Desulfotomaculum reducens)).